We begin with the raw amino-acid sequence, 148 residues long: Ribonuclease H (148 aa).

The RNase H type-1 domain occupies 1–141 (MKTVEIYTDG…ADELANLGVK (141 aa)). Mg(2+) contacts are provided by Asp9, Glu47, Asp69, and Asp133.

The protein belongs to the RNase H family. As to quaternary structure, monomer. The cofactor is Mg(2+).

The protein resides in the cytoplasm. The enzyme catalyses Endonucleolytic cleavage to 5'-phosphomonoester.. Functionally, endonuclease that specifically degrades the RNA of RNA-DNA hybrids. The sequence is that of Ribonuclease H from Hahella chejuensis (strain KCTC 2396).